A 144-amino-acid chain; its full sequence is MAANILVIHGPNLNLLGRREPAVYGQTTLEDINRNLTVKAQAAPVALSIFQSNAEHELIDRVQGAMSDGTDFIIINPAALTHTSIALRDALAATSLPFVEIHLSNVYARESFRRTSYFSDIAVGVISGLGAAGYELALQFALTR.

Tyr-24 serves as the catalytic Proton acceptor. 3 residues coordinate substrate: Asn-76, His-82, and Asp-89. His-102 serves as the catalytic Proton donor. Residues 103–104 (LS) and Arg-113 each bind substrate.

The protein belongs to the type-II 3-dehydroquinase family. In terms of assembly, homododecamer.

The enzyme catalyses 3-dehydroquinate = 3-dehydroshikimate + H2O. The protein operates within metabolic intermediate biosynthesis; chorismate biosynthesis; chorismate from D-erythrose 4-phosphate and phosphoenolpyruvate: step 3/7. Catalyzes a trans-dehydration via an enolate intermediate. In Nitrosomonas europaea (strain ATCC 19718 / CIP 103999 / KCTC 2705 / NBRC 14298), this protein is 3-dehydroquinate dehydratase.